The primary structure comprises 921 residues: Alanine--tRNA ligase (921 aa).

His602, His606, Cys706, and His710 together coordinate Zn(2+).

This sequence belongs to the class-II aminoacyl-tRNA synthetase family. Zn(2+) serves as cofactor.

It localises to the cytoplasm. The catalysed reaction is tRNA(Ala) + L-alanine + ATP = L-alanyl-tRNA(Ala) + AMP + diphosphate. Catalyzes the attachment of alanine to tRNA(Ala) in a two-step reaction: alanine is first activated by ATP to form Ala-AMP and then transferred to the acceptor end of tRNA(Ala). Also edits incorrectly charged Ser-tRNA(Ala) and Gly-tRNA(Ala) via its editing domain. This Hyperthermus butylicus (strain DSM 5456 / JCM 9403 / PLM1-5) protein is Alanine--tRNA ligase.